Reading from the N-terminus, the 465-residue chain is Cytochrome P450 85A2 (465 aa).

A helical membrane pass occupies residues 2-22 (GIMMMILGLLVIIVCLCTALL). Cys-415 serves as a coordination point for heme. Cys-462 carries S-farnesyl cysteine lipidation. Residues 462-465 (CSPY) carry the Farnesylation CAAX motif motif.

The protein belongs to the cytochrome P450 family. The cofactor is heme. In terms of processing, isoprenylated (farnesylated); this addition of a 15-carbon farnesyl isoprenoid to the carboxy terminus is required for endoplasmic reticulum localization and essential for the biosynthesis of brassinolide. In terms of tissue distribution, expressed in stems, hypocotyls, leaves, siliques, shoots, and roots, with a higher expression in apical shoots.

It is found in the membrane. It localises to the endoplasmic reticulum. The catalysed reaction is 6-deoxoteasterone + reduced [NADPH--hemoprotein reductase] + O2 = 6alpha-hydroxyteasterone + oxidized [NADPH--hemoprotein reductase] + H2O + H(+). It catalyses the reaction 6alpha-hydroxytyphasterol + reduced [NADPH--hemoprotein reductase] + O2 = teasterone + oxidized [NADPH--hemoprotein reductase] + 2 H2O + H(+). It carries out the reaction 3-dehydro-6-deoxoteasterone + reduced [NADPH--hemoprotein reductase] + O2 = 3-dehydro-6alpha-hydroxyteasterone + oxidized [NADPH--hemoprotein reductase] + H2O + H(+). The enzyme catalyses 3-dehydro-6alpha-hydroxyteasterone + reduced [NADPH--hemoprotein reductase] + O2 = 3-dehydroteasterone + oxidized [NADPH--hemoprotein reductase] + 2 H2O + H(+). The catalysed reaction is 6-deoxotyphasterol + reduced [NADPH--hemoprotein reductase] + O2 = 6alpha-hydroxytyphasterol + oxidized [NADPH--hemoprotein reductase] + H2O + H(+). It catalyses the reaction 6alpha-hydroxytyphasterol + reduced [NADPH--hemoprotein reductase] + O2 = typhasterol + oxidized [NADPH--hemoprotein reductase] + 2 H2O + H(+). It carries out the reaction 6-deoxocastasterone + reduced [NADPH--hemoprotein reductase] + O2 = 6alpha-hydroxycastasterone + oxidized [NADPH--hemoprotein reductase] + H2O + H(+). The enzyme catalyses 6alpha-hydroxycastasterone + reduced [NADPH--hemoprotein reductase] + O2 = castasterone + oxidized [NADPH--hemoprotein reductase] + 2 H2O + H(+). The catalysed reaction is 6-deoxo-28-norteasterone + 2 reduced [NADPH--hemoprotein reductase] + 2 O2 = 28-norteasterone + 2 oxidized [NADPH--hemoprotein reductase] + 3 H2O + 2 H(+). It catalyses the reaction 6-deoxo-28-norteasterone + reduced [NADPH--hemoprotein reductase] + O2 = 6alpha-hydroxy-28-norteasterone + oxidized [NADPH--hemoprotein reductase] + H2O + H(+). It carries out the reaction 6alpha-hydroxy-28-norteasterone + reduced [NADPH--hemoprotein reductase] + O2 = 28-norteasterone + oxidized [NADPH--hemoprotein reductase] + 2 H2O + H(+). The enzyme catalyses 6-deoxo-28-nortyphasterol + 2 reduced [NADPH--hemoprotein reductase] + 2 O2 = 28-nortyphasterol + 2 oxidized [NADPH--hemoprotein reductase] + 3 H2O + 2 H(+). The catalysed reaction is 6-deoxo-28-nortyphasterol + reduced [NADPH--hemoprotein reductase] + O2 = 6alpha-hydroxy-28-nortyphasterol + oxidized [NADPH--hemoprotein reductase] + H2O + H(+). It catalyses the reaction 6alpha-hydroxy-28-nortyphasterol + reduced [NADPH--hemoprotein reductase] + O2 = 28-nortyphasterol + oxidized [NADPH--hemoprotein reductase] + 2 H2O + H(+). It carries out the reaction 6-deoxo-28-norcastasterone + 2 reduced [NADPH--hemoprotein reductase] + 2 O2 = 28-norcastasterone + 2 oxidized [NADPH--hemoprotein reductase] + 3 H2O + 2 H(+). The enzyme catalyses 6-deoxo-28-norcastasterone + reduced [NADPH--hemoprotein reductase] + O2 = 6alpha-hydroxy-28-norcastasterone + oxidized [NADPH--hemoprotein reductase] + H2O + H(+). The catalysed reaction is 6alpha-hydroxy-28-norcastasterone + reduced [NADPH--hemoprotein reductase] + O2 = 28-norcastasterone + oxidized [NADPH--hemoprotein reductase] + 2 H2O + H(+). It catalyses the reaction 3-dehydro-6-deoxo-28-norteasterone + 2 reduced [NADPH--hemoprotein reductase] + 2 O2 = 6-dehydro-28-norteasterone + 2 oxidized [NADPH--hemoprotein reductase] + 3 H2O + 2 H(+). It carries out the reaction 3-dehydro-6-deoxo-28-norteasterone + reduced [NADPH--hemoprotein reductase] + O2 = 3-dehydro-6alpha-hydroxy-28-norteasterone + oxidized [NADPH--hemoprotein reductase] + H2O + H(+). The enzyme catalyses 3-dehydro-6alpha-hydroxy-28-norteasterone + reduced [NADPH--hemoprotein reductase] + O2 = 6-dehydro-28-norteasterone + oxidized [NADPH--hemoprotein reductase] + 2 H2O + H(+). The catalysed reaction is teasterone + reduced [NADPH--hemoprotein reductase] + O2 = 7-oxateasterone + oxidized [NADPH--hemoprotein reductase] + H2O + H(+). It catalyses the reaction castasterone + reduced [NADPH--hemoprotein reductase] + O2 = brassinolide + oxidized [NADPH--hemoprotein reductase] + H2O + H(+). It carries out the reaction typhasterol + reduced [NADPH--hemoprotein reductase] + O2 = 7-oxatyphasterol + oxidized [NADPH--hemoprotein reductase] + H2O + H(+). The enzyme catalyses 6-deoxocastasterone + 2 reduced [NADPH--hemoprotein reductase] + 2 O2 = castasterone + 2 oxidized [NADPH--hemoprotein reductase] + 3 H2O + 2 H(+). The catalysed reaction is 6-deoxoteasterone + 2 reduced [NADPH--hemoprotein reductase] + 2 O2 = teasterone + 2 oxidized [NADPH--hemoprotein reductase] + 3 H2O + 2 H(+). It catalyses the reaction 6-deoxotyphasterol + 2 reduced [NADPH--hemoprotein reductase] + 2 O2 = typhasterol + 2 oxidized [NADPH--hemoprotein reductase] + 3 H2O + 2 H(+). It carries out the reaction 3-dehydro-6-deoxoteasterone + 2 reduced [NADPH--hemoprotein reductase] + 2 O2 = 3-dehydroteasterone + 2 oxidized [NADPH--hemoprotein reductase] + 3 H2O + 2 H(+). It participates in plant hormone biosynthesis; brassinosteroid biosynthesis. Functionally, mediates Baeyer-Villiger oxidation and catalyzes the C6-oxidation step and lactonization in brassinosteroids biosynthesis. Converts 6-deoxocastasterone (6-deoxoCS) to castasterone (CS), and castasterone to brassinolide (BL). May also convert 6-deoxoteasterone (6-deoxoTE) to teasterone (TE), 3-dehydro-6-deoxoteasterone (6-deoxo3DT, 6-deoxo-3-DHT) to 3-dehydroteasterone (3DT, 3-DHT), and 6-deoxotyphasterol (6-deoxoTY) to typhasterol (TY). Also seems to be able to convert teasterone (TE) and typhasterol (TY) to 7-oxateasterone (7-OXTE) and 7-oxatyphasterol (7-OXTY), respectively. Catalyzes the conversion of 6-deoxo-28-norteasterone (6-deoxo-28-norTE) to 28-norteasterone (28-norTE), 6-deoxo-28-nordeoxoteasterone (6-deoxo-28-nor-3-DHT) to 28-nordeoxoteasterone (28-nor-3-DHT), 6-deoxo-28-nortyphasterol (6-deoxo-28-norTY) to 28-nortyphasterol (28-norTY) and 6-deoxo-28-norcastasterone (6-deoxo-28-norCS) to 28-norcastasterone (28-norCS). Involved in a negative regulation of responses to abscisic acid (ABA) and drought tolerance. This is Cytochrome P450 85A2 (CYP85A2) from Arabidopsis thaliana (Mouse-ear cress).